A 549-amino-acid polypeptide reads, in one-letter code: MIPNNINNRKKLKLPELFKEKYGFNKKGIELRYCDGEKGMGIFSNRKFNKGEKIMKIEPYVWSVAKHAIVCDECLKNKLDLEEGKTLKRCSNCKLVYYCSTDCQTKAWKIHKQECKILSTIPSTTDKKNINTKSTTMLLRLFIKRNLELINNNNNNNNNNNNNNNNNDNHITGQYEIIDGLLNHKDIRSDNNEYKSFSSGFCSLLGEDPQLKAPIVLEYLLKLEPNCITIPRCEASSIGLYPLMLFFNHSCKPNISIINNRKELLIITNKIIEKDEELFINYSPAICYRNERLDNLKQCFFFNCKCTLCLGEEKIKSKDLYITCNINNCGGRINQEIDININNNNNNNNNNNNNSNNNNNNNNSNEEILKCYKCLKVYKGQEKDEILKKKLIIKNLQNKLSTNTDQININQEFKSLLELYCKEIHPTDPLFYEIVNKTQLFYLGNNNKFISDNELSTIYHPRYQIMIKYHLLQVQNLEYEYCRQMLDYVNTLATTSYFKDALNILTDLMSNHLSQIDFYGFNRDELLSLLYNLQHEYKNNIKTSRKIIN.

One can recognise an SET domain in the interval 27 to 283; it reads KGIELRYCDG…KDEELFINYS (257 aa). Positions 71, 74, 90, 93, 99, 103, 111, and 115 each coordinate Zn(2+). The segment at 71–115 adopts an MYND-type zinc-finger fold; that stretch reads CDECLKNKLDLEEGKTLKRCSNCKLVYYCSTDCQTKAWKIHKQEC. Positions 340-401 form a coiled coil; that stretch reads NINNNNNNNN…IIKNLQNKLS (62 aa).

It belongs to the class V-like SAM-binding methyltransferase superfamily.

Its function is as follows. Probable methyltransferase. This Dictyostelium discoideum (Social amoeba) protein is SET and MYND domain-containing protein DDB_G0277331.